The sequence spans 176 residues: MTTIVSVRRNGHVVIAGDGQATLGNTVMKGNVKKVRRLYNDKVIAGFAGGTADAFTLFELFERKLEMHQGHLIKAAVELAKDWRTDRMLRKLEALLAVADETASLIITGNGDVVQPENDLIAIGSGGPYAQAAARALLENTELSAREIAEKALDIAGDICIYTNHFHTIEELSYKA.

Residue Thr2 is part of the active site. Positions 157, 160, and 163 each coordinate Na(+).

Belongs to the peptidase T1B family. HslV subfamily. As to quaternary structure, a double ring-shaped homohexamer of HslV is capped on each side by a ring-shaped HslU homohexamer. The assembly of the HslU/HslV complex is dependent on binding of ATP.

Its subcellular location is the cytoplasm. The enzyme catalyses ATP-dependent cleavage of peptide bonds with broad specificity.. Its activity is regulated as follows. Allosterically activated by HslU binding. Its function is as follows. Protease subunit of a proteasome-like degradation complex believed to be a general protein degrading machinery. The protein is ATP-dependent protease subunit HslV of Escherichia coli O45:K1 (strain S88 / ExPEC).